We begin with the raw amino-acid sequence, 237 residues long: Phosphoribosylaminoimidazole-succinocarboxamide synthase (237 aa).

It belongs to the SAICAR synthetase family.

It catalyses the reaction 5-amino-1-(5-phospho-D-ribosyl)imidazole-4-carboxylate + L-aspartate + ATP = (2S)-2-[5-amino-1-(5-phospho-beta-D-ribosyl)imidazole-4-carboxamido]succinate + ADP + phosphate + 2 H(+). The protein operates within purine metabolism; IMP biosynthesis via de novo pathway; 5-amino-1-(5-phospho-D-ribosyl)imidazole-4-carboxamide from 5-amino-1-(5-phospho-D-ribosyl)imidazole-4-carboxylate: step 1/2. In Edwardsiella ictaluri (strain 93-146), this protein is Phosphoribosylaminoimidazole-succinocarboxamide synthase.